A 179-amino-acid polypeptide reads, in one-letter code: Small ribosomal subunit protein uS7 (179 aa).

It belongs to the universal ribosomal protein uS7 family. Part of the 30S ribosomal subunit. Contacts proteins S9 and S11. Cross-links to IF3 and the P and E site tRNAs.

In terms of biological role, one of the primary rRNA binding proteins, it binds directly to 16S rRNA where it nucleates assembly of the head domain of the 30S subunit. Is located at the subunit interface close to the decoding center, where it has been shown to contact mRNA. Has been shown to contact tRNA in both the P and E sites; it probably blocks exit of the E site tRNA. Functionally, protein S7 is also a translational repressor protein; it regulates the expression of the str operon members to different degrees by binding to its mRNA. In Escherichia coli (strain K12), this protein is Small ribosomal subunit protein uS7 (rpsG).